The chain runs to 377 residues: All-trans-retinol dehydrogenase [NAD(+)] ADH4 (377 aa).

Cysteine 47 contributes to the Zn(2+) binding site. 48–49 contributes to the NAD(+) binding site; sequence PT. Zn(2+) is bound by residues histidine 68, cysteine 98, cysteine 101, cysteine 104, cysteine 112, and cysteine 179. Residues 204–209, aspartate 228, lysine 233, 297–299, 320–322, and arginine 372 contribute to the NAD(+) site; these read GLGCVG, VGA, and TFF.

It belongs to the zinc-containing alcohol dehydrogenase family. Class-II subfamily. As to quaternary structure, dimer. Zn(2+) serves as cofactor. In terms of tissue distribution, liver specific.

The protein localises to the cytoplasm. The enzyme catalyses all-trans-retinol + NAD(+) = all-trans-retinal + NADH + H(+). The catalysed reaction is 9-cis-retinol + NAD(+) = 9-cis-retinal + NADH + H(+). It carries out the reaction 20-oxo-(5Z,8Z,11Z,14Z)-eicosatetraenoate + NAD(+) + H2O = (5Z,8Z,11Z,14Z)-eicosatetraenedioate + NADH + 2 H(+). It catalyses the reaction 20-hydroxy-(5Z,8Z,11Z,14Z)-eicosatetraenoate + NAD(+) = 20-oxo-(5Z,8Z,11Z,14Z)-eicosatetraenoate + NADH + H(+). The enzyme catalyses 1,4-benzoquinone + NADH + H(+) = hydroquinone + NAD(+). Oxidation of 20-HETE is inhibited by low concentrations of N-heptylformamide. Oxidation of 20-HETE is a decreased by 55-65% by either all-trans-retinol or all-trans-retinoic acid. Strongly inhibited by omega-hydroxy fatty acids. In terms of biological role, catalyzes the NAD-dependent oxidation of either all-trans-retinol or 9-cis-retinol. Also oxidizes long chain omega-hydroxy fatty acids, such as 20-HETE, producing both the intermediate aldehyde, 20-oxoarachidonate and the end product, a dicarboxylic acid, (5Z,8Z,11Z,14Z)-eicosatetraenedioate. Also catalyzes the reduction of benzoquinones. The sequence is that of All-trans-retinol dehydrogenase [NAD(+)] ADH4 from Rattus norvegicus (Rat).